The sequence spans 2065 residues: WD repeat-containing protein 81 (2065 aa).

The 293-residue stretch at 325–617 (LCRNCQDELK…EPPHFGRVNV (293 aa)) folds into the BEACH domain. 4 disordered regions span residues 1082–1111 (EEEE…GGSG), 1156–1230 (TTVG…VEDR), 1271–1290 (GEKN…DSEE), and 1595–1642 (ASPG…GGDI). Positions 1101 to 1111 (KVGGGSGGGSG) are enriched in gly residues. Over residues 1156 to 1169 (TTVGTKQQNQSTAN) the composition is skewed to polar residues. The span at 1213–1228 (DGEDGGELEDEEETVE) shows a compositional bias: acidic residues. Positions 1624 to 1637 (SRSPFPAPSSTSTP) are enriched in low complexity. WD repeat units follow at residues 1767 to 1806 (GHSG…DGTR), 1813 to 1853 (TYTE…NIRC), 1906 to 1945 (LSAG…VLRG), 1948 to 1986 (GHEG…PLHQ), and 2035 to 2065 (NFRG…RLLA).

It belongs to the WD repeat WDR81 family. Widely expressed.

It is found in the early endosome membrane. The protein localises to the late endosome membrane. It localises to the lysosome membrane. Its subcellular location is the cytoplasmic vesicle. The protein resides in the autophagosome membrane. It is found in the mitochondrion. The protein localises to the cytoplasm. It localises to the cytosol. In terms of biological role, functions as a negative regulator of the PI3 kinase/PI3K activity associated with endosomal membranes. By modifying the phosphatidylinositol 3-phosphate/PtdInsP3 content of endosomal membranes may regulate endosome fusion, recycling, sorting and early to late endosome transport. May also play a role in aggrephagy, the macroautophagic degradation of ubiquitinated protein aggregates. May also be involved in maintenance of normal mitochondrial structure and organization. The sequence is that of WD repeat-containing protein 81 (wdr81) from Danio rerio (Zebrafish).